The chain runs to 87 residues: MSQVEFEMACASLKQLKGPVSDQEKLLVYSFYKQATQGDCNIPVPPATDVRAKAKYEAWMVNKGMSKMDAMRIYIAKVEELKKKEPC.

One can recognise an ACB domain in the interval 2-87 (SQVEFEMACA…VEELKKKEPC (86 aa)). An acyl-CoA-binding positions include 29–33 (YSFYK), K55, and Y74.

It belongs to the ACBP family. Exclusively expressed in late spermatids and spermatozoa. Not found in epididymis, spleen, bone marrow, skin, liver, brain, heart, kidney, muscle.

Its subcellular location is the cytoplasm. Its function is as follows. May be involved in the energy metabolism of the mature sperm. This is Diazepam-binding inhibitor-like 5 (Dbil5) from Mus musculus (Mouse).